A 198-amino-acid chain; its full sequence is MDFYPVAIEKLIEEFAKLPGIGRKTAQRLTLHVLNLPADEVREFAKALVKARGTIKYCSICGNFTDSDPCAICSNPNRDKSIICVIEEPKDIMSMERIKEYNGVYHVLHGNISPMAGRGPEDIKLRELIRRINGDVNEVIVATNPNVEGEATAMYISKILKHLGVKVTRIAHGIPVGGNLEYADEVTLLKALEGRTEI.

The segment at 58-73 adopts a C4-type zinc-finger fold; the sequence is CSICGNFTDSDPCAIC. One can recognise a Toprim domain in the interval 81-175; sequence SIICVIEEPK…KVTRIAHGIP (95 aa).

It belongs to the RecR family.

Functionally, may play a role in DNA repair. It seems to be involved in an RecBC-independent recombinational process of DNA repair. It may act with RecF and RecO. The polypeptide is Recombination protein RecR (Clostridium kluyveri (strain NBRC 12016)).